Here is an 864-residue protein sequence, read N- to C-terminus: Nitrate reductase [NADH] (864 aa).

C139 provides a ligand contact to Mo-molybdopterin. The Cytochrome b5 heme-binding domain occupies 497 to 572 (PRQYTMEEVA…LAQYYIGDLV (76 aa)). Heme is bound by residues H532 and H555. One can recognise an FAD-binding FR-type domain in the interval 606–718 (RQKVKLPLIE…KGPLGHFVYD (113 aa)). Residues 658–661 (RAYT), 675–679 (LIKVY), F680, F687, 692–694 (KMS), and T746 each bind FAD.

The protein belongs to the nitrate reductase family. Homodimer. Requires FAD as cofactor. Heme serves as cofactor. It depends on Mo-molybdopterin as a cofactor.

The catalysed reaction is nitrite + NAD(+) + H2O = nitrate + NADH + H(+). Nitrate reductase is a key enzyme involved in the first step of nitrate assimilation in plants, fungi and bacteria. The chain is Nitrate reductase [NADH] (NITA) from Volvox carteri (Green alga).